A 386-amino-acid chain; its full sequence is Sphingosine 1-phosphate receptor 4 (386 aa).

Residues 1–56 (MNISTWSTLVTPESCHRLAASGHSLLIVLHYNHSGRLASRGGSEDGGGLGMLRGPS) are Extracellular-facing. N-linked (GlcNAc...) asparagine glycosylation is found at Asn2 and Asn32. A helical membrane pass occupies residues 57–77 (VAAGCLVVLENAMVLAAIAIY). Over 78 to 87 (MRSRRWVYYC) the chain is Cytoplasmic. A helical transmembrane segment spans residues 88 to 108 (LLNITLSDLLTGLAYVVNVLL). The Extracellular segment spans residues 109 to 120 (SGTRTFQLSPVH). The chain crosses the membrane as a helical span at residues 121–141 (WFLREGLLFMALAASTFSLLF). Residues 142–163 (TAGERFATMVRVAESGATKTSR) lie on the Cytoplasmic side of the membrane. Residues 164 to 184 (VYGCIGLCWLLAAILGLLPLL) form a helical membrane-spanning segment. The Extracellular portion of the chain corresponds to 185–208 (GWNCVCAFPRCSSLLPLYSKGYVL). The helical transmembrane segment at 209–229 (FCVVVFALILVAILSLYGAIF) threads the bilayer. The Cytoplasmic segment spans residues 230–254 (RVVRANGQKSPRPPARRKSRRLLNT). Residues 255–275 (VLMILVAFVVCWGPLFGLLLA) traverse the membrane as a helical segment. Residues 276-290 (DIFGSNVWAQEYLRG) lie on the Extracellular side of the membrane. The chain crosses the membrane as a helical span at residues 291–311 (MDWILALAVFNSAINPLIYSF). Residues 312-386 (RSREVQRAVL…LSSISSVRST (75 aa)) lie on the Cytoplasmic side of the membrane. The S-palmitoyl cysteine moiety is linked to residue Cys325.

This sequence belongs to the G-protein coupled receptor 1 family. As to expression, specifically expressed in fetal and adult lymphoid and hematopoietic tissue. Expressed in lung, spleen, thymus and lymph node but absent in other non-lymphatic tissue. Coexpressed with GNA15 at the same relative levels in all tissues examined, with the highest levels in adult spleen and lung.

Its subcellular location is the cell membrane. In terms of biological role, receptor for the lysosphingolipid sphingosine 1-phosphate (S1P). S1P is a bioactive lysophospholipid that elicits diverse physiological effect on most types of cells and tissues. May be involved in cell migration processes that are specific for lymphocytes. This is Sphingosine 1-phosphate receptor 4 (S1pr4) from Mus musculus (Mouse).